The chain runs to 156 residues: Deoxyuridine 5'-triphosphate nucleotidohydrolase (156 aa).

Belongs to the dCTP deaminase family. Archaeal dUTPase subfamily. Homotrimer.

It catalyses the reaction dUTP + H2O = dUMP + diphosphate + H(+). The protein operates within pyrimidine metabolism; dUMP biosynthesis; dUMP from dCTP (dUTP route): step 2/2. Its function is as follows. This enzyme is involved in nucleotide metabolism: it produces dUMP, the immediate precursor of thymidine nucleotides and it decreases the intracellular concentration of dUTP so that uracil cannot be incorporated into DNA. In Methanocaldococcus jannaschii (strain ATCC 43067 / DSM 2661 / JAL-1 / JCM 10045 / NBRC 100440) (Methanococcus jannaschii), this protein is Deoxyuridine 5'-triphosphate nucleotidohydrolase.